Consider the following 490-residue polypeptide: Cytochrome P450 2C25 (490 aa).

Cys-435 is a heme binding site.

Belongs to the cytochrome P450 family. The cofactor is heme.

The protein resides in the endoplasmic reticulum membrane. The protein localises to the microsome membrane. It carries out the reaction an organic molecule + reduced [NADPH--hemoprotein reductase] + O2 = an alcohol + oxidized [NADPH--hemoprotein reductase] + H2O + H(+). Its function is as follows. Catalyzes the hydroxylation of tolbutamide and the N-demethylation of aminopyrine and benzphetamine. Also has testosterone hydroxylase (16 beta) activity. This chain is Cytochrome P450 2C25 (CYP2C25), found in Mesocricetus auratus (Golden hamster).